Consider the following 234-residue polypeptide: Cell adhesion molecule CEACAM15 (234 aa).

The first 32 residues, 1-32 (MGAETMESPSLFLCKGLLLTASLLICWNWSTA), serve as a signal peptide directing secretion. N-linked (GlcNAc...) asparagine glycosylation is found at Asn28, Asn75, Asn151, and Asn184. Residues 146-226 (PYLQLNHTRL…NSFSSKKSYP (81 aa)) enclose the Ig-like C2-type domain. A disulfide bridge links Cys165 with Cys213.

It belongs to the immunoglobulin superfamily. CEA family. As to expression, detected in placenta.

The chain is Cell adhesion molecule CEACAM15 from Mus musculus (Mouse).